A 97-amino-acid chain; its full sequence is Nuclear protein 2 (97 aa).

The interval 76–97 is disordered; the sequence is LLNGQRKRRQRQLHPKMRTRLT. The segment covering 80-97 has biased composition (basic residues); the sequence is QRKRRQRQLHPKMRTRLT.

The protein belongs to the NUPR family.

The protein resides in the nucleus. Its function is as follows. Acts as a transcriptional repressor by inhibiting gene expression at the NUPR1 promoter in a p53/TP53-dependent manner in cancer cells. Involved in the G1 cell cycle arrest, and in a decrease in cell viability and cell proliferation. Plays a role as a negative regulator of the protumoral factor NUPR1. The sequence is that of Nuclear protein 2 from Homo sapiens (Human).